Reading from the N-terminus, the 658-residue chain is MTQLAIGEATPHGATYDGHGVNFTLFSAHAERVELCVFDSRGNERRYDLPGRRGDVWHGYLAGARPGLRYGYRVHGPWQPAQGHRFNPAKLLLDPYARRVEGELKDHPLLHGGHDEPDYRDNAAVAPKSVVISDHYDWEDDAAPRTPWGKTVIYEAHVKGLTYLHPELPQEIRGTYKALGHPVMVAYFKQLGITALELLPVAQFASEPRLQRMGLTNYWGYNPMAMFALHPAWASSPEMALDEFRDAVKALHRAGIEVILDIVLNHSAELDLDGPTFSLRGIDNRSYYWIRDDGDYHNWTGCGNTLNLSHPGVVEYACECLRYWVETCHVDGFRFDLASVMGRTPTFRQDAPLFAAIKACPVLSTVKLIAEPWDIGEGGYQVGNFPPPFAEWNDHFRDAARRFWLPRNLTTGEFACRFAASSDVFKRNGRAPGASVNLLTAHDGFTLRDCVCFNQKHNEANGEENRDGTNSNYSDNHGKEGLGGPLDLMERRRDSIHALLATLLLSQGTPMLLAGDEHGHSQHGNNNAYCQDNALTWLDWQQANRGLTTFTAALIRLRQQIPALTGNSWWEEGDGNVRWLNKNAQPLSADEWQNGPKLMQILLSDRFLIAINATLEVTDIVLPEGEWRAVPPFAGEDNPVITAVWQGPAHGLCVFQRG.

The Nucleophile role is filled by Asp336. Glu371 acts as the Proton donor in catalysis. The interval 459 to 484 (EANGEENRDGTNSNYSDNHGKEGLGG) is disordered.

The protein belongs to the glycosyl hydrolase 13 family.

The catalysed reaction is Hydrolysis of (1-&gt;6)-alpha-D-glucosidic linkages to branches with degrees of polymerization of three or four glucose residues in limit dextrin.. It functions in the pathway glycan degradation; glycogen degradation. Removes maltotriose and maltotetraose chains that are attached by 1,6-alpha-linkage to the limit dextrin main chain, generating a debranched limit dextrin. In Salmonella dublin (strain CT_02021853), this protein is Glycogen debranching enzyme.